The sequence spans 345 residues: CCAAT/enhancer-binding protein beta (345 aa).

The segment at 1-24 (MQRLVAWDPACLPLPPPPPAFKSM) is required for Lys-174 sumoylation. An Asymmetric dimethylarginine; by CARM1 modification is found at R3. Residues 24–135 (MEVANFYYEA…YGGKNCKKPA (112 aa)) are required for MYC transcriptional repression. Position 43 is an N6-acetyllysine; alternate (K43). K43 carries the N6-methylated lysine; alternate modification. Disordered stretches follow at residues 46 to 67 (PAAPPAARPGPRPPAGELGSIG) and 79 to 116 (LEPLGAPQAPAPATATDTFEAAPPAPAPAPASSGQHHD). Residues 47-59 (AAPPAARPGPRPP) are compositionally biased toward pro residues. A compositionally biased stretch (low complexity) spans 84–100 (APQAPAPATATDTFEAA). Residues 116 to 124 (DFLSDLFSD) carry the 9aaTAD motif. N6-acetyllysine; by KAT2A and KAT2B is present on residues K129 and K132. Position 133 is an N6-acetyllysine; by KAT2A and KAT2B; alternate (K133). K133 participates in a covalent cross-link: Glycyl lysine isopeptide (Lys-Gly) (interchain with G-Cter in SUMO2); alternate. A disordered region spans residues 157–178 (FAPLHPPPPPPPPPAELKAEPG). The segment covering 160–171 (LHPPPPPPPPPA) has biased composition (pro residues). Residue K174 forms a Glycyl lysine isopeptide (Lys-Gly) (interchain with G-Cter in SUMO2); alternate linkage. Residue K174 forms a Glycyl lysine isopeptide (Lys-Gly) (interchain with G-Cter in SUMO); alternate linkage. Glycyl lysine isopeptide (Lys-Gly) (interchain with G-Cter in SUMO2) cross-links involve residues K185 and K187. The segment covering 218–232 (SGSSGSLSTSSSSSP) has biased composition (low complexity). The segment at 218–271 (SGSSGSLSTSSSSSPPGTPSPADAKAPPTACYAGAAPAPSQVKSKAKKTVDKHS) is disordered. T226 carries the phosphothreonine; by GSK3-beta modification. S227 and S228 each carry an O-linked (GlcNAc) serine glycan. S231 is subject to Phosphoserine; by GSK3-beta. T235 bears the Phosphothreonine; by RPS6KA1, CDK2 and MAPK mark. Residues K260 and K262 each participate in a glycyl lysine isopeptide (Lys-Gly) (interchain with G-Cter in SUMO2) cross-link. At T266 the chain carries Phosphothreonine; by RPS6KA1 and PKC/PRKCA. Residues 271-334 (SDEYKIRRER…STLRNLFKQL (64 aa)) enclose the bZIP domain. A basic motif region spans residues 275–295 (KIRRERNNIAVRKSRDKAKMR). S288 is modified (phosphoserine; by PKC/PRKCA). The interval 297 to 304 (LETQHKVL) is leucine-zipper. S325 is subject to Phosphoserine; by CaMK2. A Glycyl lysine isopeptide (Lys-Gly) (interchain with G-Cter in SUMO2) cross-link involves residue K332.

Belongs to the bZIP family. C/EBP subfamily. In terms of assembly, binds DNA as a homodimer and as a heterodimer. Interacts with ATF4. Binds DNA as a heterodimer with ATF4. Interacts with MYB; within the complex, MYB and CEBPB bind to different promoter regions. Can form stable heterodimers with CEBPD. Can form stable heterodimers with CEBPA and CEBPE. Interacts with SIX1. Isoform 2 and isoform 3 also form heterodimers. Interacts with TRIM28 and PTGES2. Interacts with PRDM16. Interacts with CCDC85B. Forms a complex with THOC5. Interacts with ZNF638; this interaction increases transcriptional activation. Interacts with CIDEA and CIDEC; these interactions increase transcriptional activation of a subset of CEBPB downstream target genes. Interacts with DDIT3/CHOP. Interacts with EP300; recruits EP300 to chromatin. Interacts with RORA; the interaction disrupts interaction with EP300. Interacts (not methylated) with MED23, MED26, SMARCA2, SMARCB1 and SMARCC1. Interacts with KAT2A and KAT2B. Interacts with ATF5; EP300 is required for ATF5 and CEBPB interaction and DNA binding. Interacts with NFE2L1; the heterodimer represses expression of DSPP during odontoblast differentiation. Methylated. Methylation at Arg-3 by CARM1 and at Lys-43 by EHMT2 inhibit transactivation activity. Methylation is probably inhibited by phosphorylation at Thr-235. Post-translationally, sumoylated by polymeric chains of SUMO2 or SUMO3. Sumoylation at Lys-174 is required for inhibition of T-cells proliferation. In adipocytes, sumoylation at Lys-174 by PIAS1 leads to ubiquitination and subsequent proteasomal degradation. Desumoylated by SENP2, which abolishes ubiquitination and stabilizes protein levels. In terms of processing, ubiquitinated, leading to proteasomal degradation. Phosphorylated at Thr-235 by MAPK and CDK2, serves to prime phosphorylation at Thr-226 and Ser-231 by GSK3B and acquire DNA-binding as well as transactivation activities, required to induce adipogenesis. MAPK and CDK2 act sequentially to maintain Thr-235 in the primed phosphorylated state during mitotical cloning expansion and thereby progression of terminal differentiation. Phosphorylation at Thr-266 enhances transactivation activity. Phosphorylation at Ser-325 in response to calcium increases transactivation activity. Phosphorylated at Thr-235 by RPS6KA1. Post-translationally, O-glycosylated, glycosylation at Ser-227 and Ser-228 prevents phosphorylation on Thr-235, Ser-231 and Thr-226 and DNA binding activity which delays the adipocyte differentiation program. In terms of processing, acetylated. Acetylation at Lys-43 is an important and dynamic regulatory event that contributes to its ability to transactivate target genes, including those associated with adipogenesis and adipocyte function. Deacetylation by HDAC1 represses its transactivation activity. Acetylated by KAT2A and KAT2B within a cluster of lysine residues between amino acids 129-133, this acetylation is strongly induced by glucocorticoid treatment and enhances transactivation activity. As to expression, expressed at low levels in the lung, kidney and spleen.

The protein resides in the nucleus. It localises to the cytoplasm. Important transcription factor regulating the expression of genes involved in immune and inflammatory responses. Also plays a significant role in adipogenesis, as well as in the gluconeogenic pathway, liver regeneration, and hematopoiesis. The consensus recognition site is 5'-T[TG]NNGNAA[TG]-3'. Its functional capacity is governed by protein interactions and post-translational protein modifications. During early embryogenesis, plays essential and redundant roles with CEBPA. Has a promitotic effect on many cell types such as hepatocytes and adipocytes but has an antiproliferative effect on T-cells by repressing MYC expression, facilitating differentiation along the T-helper 2 lineage. Binds to regulatory regions of several acute-phase and cytokines genes and plays a role in the regulation of acute-phase reaction and inflammation. Also plays a role in intracellular bacteria killing. During adipogenesis, is rapidly expressed and, after activation by phosphorylation, induces CEBPA and PPARG, which turn on the series of adipocyte genes that give rise to the adipocyte phenotype. The delayed transactivation of the CEBPA and PPARG genes by CEBPB appears necessary to allow mitotic clonal expansion and thereby progression of terminal differentiation. Essential for female reproduction because of a critical role in ovarian follicle development. Restricts osteoclastogenesis: together with NFE2L1; represses expression of DSPP during odontoblast differentiation. In terms of biological role, essential for gene expression induction in activated macrophages. Plays a major role in immune responses such as CD4(+) T-cell response, granuloma formation and endotoxin shock. Not essential for intracellular bacteria killing. Its function is as follows. Acts as a dominant negative through heterodimerization with isoform 2. Promotes osteoblast differentiation and osteoclastogenesis. The sequence is that of CCAAT/enhancer-binding protein beta from Homo sapiens (Human).